Here is a 128-residue protein sequence, read N- to C-terminus: MAKLSNEELLDVFKEMTLLELSSFLKEFEETFDVTAAAPVAAAAPAAAGAAAPAAEEQDEFDVVLESAGDKKIQVIKVVREIVSGLGLKEAKELVEGAPKPILEKVDKEKANEAKTKLEESGAKVSLK.

It belongs to the bacterial ribosomal protein bL12 family. In terms of assembly, homodimer. Part of the ribosomal stalk of the 50S ribosomal subunit. Forms a multimeric L10(L12)X complex, where L10 forms an elongated spine to which 2 to 4 L12 dimers bind in a sequential fashion. Binds GTP-bound translation factors.

Its function is as follows. Forms part of the ribosomal stalk which helps the ribosome interact with GTP-bound translation factors. Is thus essential for accurate translation. The sequence is that of Large ribosomal subunit protein bL12 from Saccharopolyspora erythraea (strain ATCC 11635 / DSM 40517 / JCM 4748 / NBRC 13426 / NCIMB 8594 / NRRL 2338).